The following is a 930-amino-acid chain: Inter-alpha-trypsin inhibitor heavy chain H4 (930 aa).

An N-terminal signal peptide occupies residues 1–28 (MKPPRPVRTCSKVLVLLSLLAIHQTTTA). One can recognise a VIT domain in the interval 29 to 148 (EKNGIDIYSL…KITFELVYEE (120 aa)). N-linked (GlcNAc...) asparagine glycans are attached at residues Asn-81 and Asn-207. Residues 272–432 (PKNVVFVIDK…YAFLEKLALD (161 aa)) enclose the VWFA domain. N-linked (GlcNAc...) asparagine; atypical glycosylation is present at Asn-274. 2 N-linked (GlcNAc...) asparagine glycosylation sites follow: Asn-517 and Asn-577. A disordered region spans residues 595–618 (KPDDQEQSQVAEKPMEGESRNRNV). The tract at residues 658–688 (MNFRPGVLSSRQLGLPGPPDVPDHAAYHPFR) is proline-rich (PRR) potential bioactive peptide. Positions 662-688 (PGVLSSRQLGLPGPPDVPDHAAYHPFR) are cleaved as a propeptide — potentially active peptide. O-linked (GalNAc...) threonine glycosylation is found at Thr-719, Thr-720, and Thr-722. The tract at residues 719–725 (TTMTTQT) is O-glycosylated at three sites. A disulfide bridge connects residues Cys-747 and Cys-925.

This sequence belongs to the ITIH family. Interacts (via C-terminus) with DNAJC1 (via SANT 2 domain); this interaction protects ITIH4 against cleavage by kallikrein in vitro. In terms of processing, cleaved by plasma kallikrein to yield 100 kDa and 35 kDa fragments, and the resulting 100 kDa fragment is further converted to a 70 kDa fragment. Post-translationally, N- and O-glycosylated. In urine, O-linked glycosylation on threonine residues in the region from Thr-719 to Thr-725 consists of core 1 or possibly core 8 glycans. Mainly Hex(HexNAc)(2), but also some Hex(3)(HexNAc)(3). N-glycosylated but not O-glycosylated in plasma. Liver specific.

It localises to the secreted. In terms of biological role, type II acute-phase protein (APP) involved in inflammatory responses to trauma. May also play a role in liver development or regeneration. This Homo sapiens (Human) protein is Inter-alpha-trypsin inhibitor heavy chain H4 (ITIH4).